Reading from the N-terminus, the 394-residue chain is Phosphopentomutase (394 aa).

Residues Asp-14, Asp-287, His-292, Asp-328, His-329, and His-340 each contribute to the Mn(2+) site.

Belongs to the phosphopentomutase family. Mn(2+) serves as cofactor.

The protein resides in the cytoplasm. It carries out the reaction 2-deoxy-alpha-D-ribose 1-phosphate = 2-deoxy-D-ribose 5-phosphate. It catalyses the reaction alpha-D-ribose 1-phosphate = D-ribose 5-phosphate. It participates in carbohydrate degradation; 2-deoxy-D-ribose 1-phosphate degradation; D-glyceraldehyde 3-phosphate and acetaldehyde from 2-deoxy-alpha-D-ribose 1-phosphate: step 1/2. Functionally, isomerase that catalyzes the conversion of deoxy-ribose 1-phosphate (dRib-1-P) and ribose 1-phosphate (Rib-1-P) to deoxy-ribose 5-phosphate (dRib-5-P) and ribose 5-phosphate (Rib-5-P), respectively. The polypeptide is Phosphopentomutase (Listeria welshimeri serovar 6b (strain ATCC 35897 / DSM 20650 / CCUG 15529 / CIP 8149 / NCTC 11857 / SLCC 5334 / V8)).